The chain runs to 225 residues: 3-dehydroquinate dehydratase (225 aa).

3-dehydroquinate is bound by residues serine 6, 30–32 (EWR), and arginine 62. Histidine 118 acts as the Proton donor/acceptor in catalysis. Lysine 143 serves as the catalytic Schiff-base intermediate with substrate. Positions 186, 205, and 209 each coordinate 3-dehydroquinate.

Belongs to the type-I 3-dehydroquinase family. Homodimer.

The enzyme catalyses 3-dehydroquinate = 3-dehydroshikimate + H2O. It functions in the pathway metabolic intermediate biosynthesis; chorismate biosynthesis; chorismate from D-erythrose 4-phosphate and phosphoenolpyruvate: step 3/7. In terms of biological role, involved in the third step of the chorismate pathway, which leads to the biosynthesis of aromatic amino acids. Catalyzes the cis-dehydration of 3-dehydroquinate (DHQ) and introduces the first double bond of the aromatic ring to yield 3-dehydroshikimate. The protein is 3-dehydroquinate dehydratase of Streptococcus pneumoniae (strain P1031).